Reading from the N-terminus, the 1425-residue chain is Zinc finger FYVE domain-containing protein 9 (1425 aa).

Disordered regions lie at residues 201 to 255 (ESTE…IGRD) and 291 to 352 (EDLT…SGRN). Basic and acidic residues predominate over residues 202–225 (STEKDMNSEKQMDPLNRPKTEGRS). Composition is skewed to polar residues over residues 230-245 (CPTS…SPSQ) and 296-312 (KISS…SFSH). Ser306 and Ser668 each carry phosphoserine. The FYVE-type zinc-finger motif lies at 699 to 758 (DSQAPNCMKCEARFTFTKRRHHCRACGKVFCASCCSLKCKLLYMDRKEARVCVICHSVLM). Cys705, Cys708, Cys721, Cys724, Cys729, Cys732, Cys750, and Cys753 together coordinate Zn(2+). Positions 767–823 (MSASSQSPNPNNPAEYCSTIPPLQQAQASGALSSPPPTVMVPVGVLKHPGAEVAQPR) are SBD.

As to quaternary structure, interacts (via the SBD region) with SMAD2; the interaction recruits SMAD2 to the TGF-beta receptor and is disrupted by phosphorylation of SMAD2 upon TGF-beta receptor activation. Interacts with SMAD3. Interacts with TGFBR1 and TGFBR2; the interaction recruits SMAD2 to the TGF-beta receptor. Interacts with PML. As to expression, ubiquitous. In the brain found primarily in the cerebrovascular smooth muscle cells and reactive astrocytes.

The protein resides in the cytoplasm. Its subcellular location is the early endosome membrane. Its function is as follows. Early endosomal protein that functions to recruit SMAD2/SMAD3 to intracellular membranes and to the TGF-beta receptor. Plays a significant role in TGF-mediated signaling by regulating the subcellular location of SMAD2 and SMAD3 and modulating the transcriptional activity of the SMAD3/SMAD4 complex. Possibly associated with TGF-beta receptor internalization. This is Zinc finger FYVE domain-containing protein 9 (ZFYVE9) from Homo sapiens (Human).